Here is a 211-residue protein sequence, read N- to C-terminus: Guanylate kinase (211 aa).

One can recognise a Guanylate kinase-like domain in the interval 5–184; the sequence is GLLIVFSGPS…AAERVKRIIE (180 aa). Position 12 to 19 (12 to 19) interacts with ATP; that stretch reads GPSGVGKG.

Belongs to the guanylate kinase family.

It is found in the cytoplasm. The catalysed reaction is GMP + ATP = GDP + ADP. Functionally, essential for recycling GMP and indirectly, cGMP. The sequence is that of Guanylate kinase from Streptococcus pyogenes serotype M1.